The primary structure comprises 536 residues: Caspase recruitment domain-containing protein 9 (536 aa).

A Phosphoserine modification is found at S2. Zn(2+) is bound by residues D3, C10, and H73. The region spanning 6–98 (NDDECWSVLE…QLYKKVTGKE (93 aa)) is the CARD domain. The segment at 99 to 116 (PARVFSMIIDASGESGLT) is linker. Coiled coils occupy residues 117 to 277 (QLLM…DRSS) and 332 to 419 (LRKD…QQLE). K125 is covalently cross-linked (Glycyl lysine isopeptide (Lys-Gly) (interchain with G-Cter in ubiquitin)). T231 carries the phosphothreonine modification. A Phosphoserine modification is found at S277. Phosphoserine is present on residues S424, S425, S431, S450, S460, S483, and S498. Residues 427–536 (LEDGSPRRSQ…GSDNTDTEGS (110 aa)) are disordered. The segment covering 487–502 (PPEKERRRLKESFENY) has biased composition (basic and acidic residues). Residues 503-513 (RRKRALRKMQK) are compositionally biased toward basic residues. 2 positions are modified to phosphothreonine; by CK2: T531 and T533.

As to quaternary structure, monomer. Homodimer; homodimerization is mediated by the CARD domain which forms an extensive interaction with the adjacent linker and coiled-coil regions; leads to an autoinhibited state. Homomultimer; polymerizes following activation, forming a nucleating helical template that seeds BCL10-filament formation via a CARD-CARD interaction. Interacts (via CARD domain) with BCL10 (via CARD domain); interaction takes place following CARD9 activation and polymerization, leading to the formation of a filamentous CBM complex assembly. Component of a CBM complex (CARD9-BCL10, MALT1), composed of CARD9, BCL10 and MALT1. Interacts with RASGRF1. Interacts with NOD2 (via NACHT domain); interaction is direct. Interacts with RIPK2. Interacts with VHL; without leading to protein degradation. Post-translationally, phosphorylated at Thr-231 by PRKCD downstream of C-type lectin receptors activation: phosphorylation promotes interaction with BCL10, followed by activation of NF-kappa-B and MAP kinase p38 pathways. Phosphorylated at Thr-531 and Thr-533 by CK2 following interaction with VHL, leading to inhibit the ability to activate NF-kappa-B. In terms of processing, ubiquitinated at Lys-125 via 'Lys-27'-linked ubiquitin by TRIM62 downstream of C-type lectin receptors activation; leading to CARD9 activation, followed by activation of NF-kappa-B and MAP kinase p38 pathways. Deubiquitinated at Lys-125 by USP15, inhibiting CARD9. In terms of tissue distribution, expression is restricted to several populations of phagocytes, such as macrophages, monocytes, and dendritic cells. Highly expressed in spleen. Also detected in liver, placenta, lung, peripheral blood leukocytes and in brain.

It localises to the cytoplasm. With respect to regulation, maintained in an autoinhibited state via homodimerization in which the CARD domain forms an extensive interaction with the adjacent linker and coiled-coil regions. Activation downstream of C-type lectin receptors, by phosphorylation by PRKCD and/or ubiquitination by TRIM62, triggers disruption of the CARD domain-coiled coil interface, CARD9 homooligomerization and BCL10 recruitment, followed by activation of NF-kappa-B and MAP kinase p38 pathways. Zinc-binding inhibits activation by stabilizing the CARD ground-state conformation and restricting its capacity to form BCL10-nucleating filaments. Functionally, adapter protein that plays a key role in innate immune response against fungi by forming signaling complexes downstream of C-type lectin receptors. CARD9-mediated signals are essential for antifungal immunity against a subset of fungi from the phylum Ascomycota. Transduces signals in myeloid cells downstream of C-type lectin receptors CLEC7A (dectin-1), CLEC6A (dectin-2) and CLEC4E (Mincle), which detect pathogen-associated molecular pattern metabolites (PAMPs), such as fungal carbohydrates, and trigger CARD9 activation. Upon activation, CARD9 homooligomerizes to form a nucleating helical template that recruits BCL10 via CARD-CARD interaction, thereby promoting polymerization of BCL10 and subsequent recruitment of MALT1: this leads to activation of NF-kappa-B and MAP kinase p38 (MAPK11, MAPK12, MAPK13 and/or MAPK14) pathways which stimulate expression of genes encoding pro-inflammatory cytokines and chemokines. CARD9 signaling in antigen-presenting cells links innate sensing of fungi to the activation of adaptive immunity and provides a cytokine milieu that induces the development and subsequent of interleukin 17-producing T helper (Th17) cells. Also involved in activation of myeloid cells via classical ITAM-associated receptors and TLR: required for TLR-mediated activation of MAPK, while it is not required for TLR-induced activation of NF-kappa-B. CARD9 can also be engaged independently of BCL10: forms a complex with RASGRF1 downstream of C-type lectin receptors, which recruits and activates HRAS, leading to ERK activation and the production of cytokines. Acts as an important regulator of the intestinal commensal fungi (mycobiota) component of the gut microbiota. Plays an essential role in antifungal immunity against dissemination of gut fungi: acts by promoting induction of antifungal IgG antibodies response in CX3CR1(+) macrophages to confer protection against disseminated C.albicans or C.auris infection. Also mediates immunity against other pathogens, such as certain bacteria, viruses and parasites; CARD9 signaling is however redundant with other innate immune responses. In response to L.monocytogenes infection, required for the production of inflammatory cytokines activated by intracellular peptidoglycan: acts by connecting NOD2 recognition of peptidoglycan to downstream activation of MAP kinases (MAPK) without activating NF-kappa-B. This is Caspase recruitment domain-containing protein 9 from Homo sapiens (Human).